Reading from the N-terminus, the 384-residue chain is MELHNLSSPSPSLSSSVLPPSFSPSPSSAPSAFTTVGGSSGGPCHPTSSSLVSAFLAPILALEFVLGLVGNSLALFIFCIHTRPWTSNTVFLVSLVAADFLLISNLPLRVDYYLLHETWRFGAAACKVNLFMLSTNRTASVVFLTAIALNRYLKVVQPHHVLSRASVGAAARVAGGLWVGILLLNGHLLLSTFSGPSCLSYRVGTKPSASLRWHQALYLLEFFLPLALILFAIVSIGLTIRNRGLGGQAGPQRAMRVLAMVVAVYTICFLPSIIFGMASMVAFWLSACRSLDLCTQLFHGSLAFTYLNSVLDPVLYCFSSPNFLHQSRALLGLTRGRQGPVSDESSYQPSRQWRYREASRKAEAIGKLKVQGEVSLEKEGSSQG.

The interval 1-21 (MELHNLSSPSPSLSSSVLPPS) is disordered. The Extracellular segment spans residues 1 to 58 (MELHNLSSPSPSLSSSVLPPSFSPSPSSAPSAFTTVGGSSGGPCHPTSSSLVSAFLAP). A glycan (N-linked (GlcNAc...) asparagine) is linked at Asn-5. A compositionally biased stretch (low complexity) spans 7 to 21 (SSPSPSLSSSVLPPS). A helical transmembrane segment spans residues 59 to 79 (ILALEFVLGLVGNSLALFIFC). The Cytoplasmic segment spans residues 80–87 (IHTRPWTS). Residues 88–108 (NTVFLVSLVAADFLLISNLPL) traverse the membrane as a helical segment. The Extracellular segment spans residues 109–129 (RVDYYLLHETWRFGAAACKVN). Cysteines 126 and 198 form a disulfide. Residues 130–152 (LFMLSTNRTASVVFLTAIALNRY) traverse the membrane as a helical segment. At 153–172 (LKVVQPHHVLSRASVGAAAR) the chain is on the cytoplasmic side. Residues 173–193 (VAGGLWVGILLLNGHLLLSTF) traverse the membrane as a helical segment. Over 194–215 (SGPSCLSYRVGTKPSASLRWHQ) the chain is Extracellular. Residues 216–236 (ALYLLEFFLPLALILFAIVSI) traverse the membrane as a helical segment. Over 237–256 (GLTIRNRGLGGQAGPQRAMR) the chain is Cytoplasmic. Residues 257–277 (VLAMVVAVYTICFLPSIIFGM) traverse the membrane as a helical segment. Topologically, residues 278–297 (ASMVAFWLSACRSLDLCTQL) are extracellular. A helical membrane pass occupies residues 298–318 (FHGSLAFTYLNSVLDPVLYCF). Topologically, residues 319 to 384 (SSPNFLHQSR…SLEKEGSSQG (66 aa)) are cytoplasmic.

This sequence belongs to the G-protein coupled receptor 1 family. Expressed in various tissues except brain. Expression is more intense in liver, kidney, peripheral leukocyte, lung, and spleen than in other tissues. Highly expressed in eosinophils, neutrophils, and lung macrophages.

Its subcellular location is the membrane. In terms of biological role, receptor for eicosanoids and polyunsaturated fatty acids such as 5-oxo-6E,8Z,11Z,14Z-eicosatetraenoic acid (5-OXO-ETE), 5(S)-hydroperoxy-6E,8Z,11Z,14Z-eicosatetraenoic acid (5(S)-HPETE) and arachidonic acid. Seems to be coupled to the G(i)/G(o), families of heteromeric G proteins. The chain is Oxoeicosanoid receptor 1 (OXER1) from Homo sapiens (Human).